Consider the following 739-residue polypeptide: MDSAARDKTQPALPTGLEWPEQERAEQLARGAALKWASGIFYRPEQLARLGQYRNREVQRTCSLEARIKSVVQSYLEGVKTGVWQLAQALEAVQGAREALGQARGLLRDMAEAAQTLEPLREQVVEHKQLQALSQLLPRLRAVPAAVAHTQTLIDAQRLLEAYVSLRELEQLQEETCVPLGGLELPVFEGLGPLAEALGQAVEAAAGAAGQLARENPALLVAAVRVAEVDAGCTTSLEQAPRDWRQRCLRALQQGLERVHFGTSLQPGPGELAKWLEALRVALPAELAMAEALVAPCCPPHYKVVQLWAHTLHGGLRRCLQQLLEGPELEEADTFTLLHWVLHVYQGPEMMGSLELGPEADVSDLEPLLTLENIEQLEATFVAKVQAKVAQWLQKALDGEVVEWGREQEPDTDLSGFYHSPLPAIVLQILEENIRVTRIVSVSLEQRVHGMALSELSAFLRSFTDALIRFSRDHLRGEAVVPHYVPYLLATLNHQLALSSSVSVLQPKWVVPGVLAPVEAELDKLQKRICRLVLEALLAELQPLFAALPSRRWLSSPELLDDVCKRTARFCQNFQHVRNPAVQLLLVEAERTVVLQYLSALMQGRLVCRGADERTQAAERMQHDAAQLQELFLGLGLEESVQCVPVLLALKELLNLRDPTLLGLVVAGLRQQFPDVSEDHVSALLDLRGDVSREQRLAALSSLRAGPQPSPQAGRRALFSLVPTPAPSLASCFPSGSCA.

Positions 1–370 (MDSAARDKTQ…DVSDLEPLLT (370 aa)) are mediates interaction with EXOC2, EXOC4 and EXOC5.

Belongs to the SEC6 family. As to quaternary structure, interacts with EXOC2, EXOC4 and EXOC5; may be part of the exocyst.

The protein resides in the cytoplasmic vesicle. It localises to the secretory vesicle. Its function is as follows. As part of the exocyst, may play a role in regulated exocytosis of insulin granules. The polypeptide is Exocyst complex component 3-like protein (EXOC3L1) (Bos taurus (Bovine)).